The following is a 496-amino-acid chain: MASSTGDRSQAVRHGLRAKVLTLDGMNPRVRRVEYAVRGPIVQRALELEQELRQGVKKPFTEVIRANIGDAQAMGQRPITFLRQVLALCVNPDLLSSPNFPDDAKKRAERILQACGGHSLGAYSVSSGIQLIREDVARYIERRDGGIPADPNNVFLSTGASDAIVTVLKLLVAGEGHTRTGVLIPIPQYPLYSATLAELGAVQVDYYLDEERAWALDVAELHRALGQARDHCRPRALCVINPGNPTGQVQTRECIEAVIRFAFEERLFLLADEVYQDNVYAAGSQFHSFKKVLMEMGPPYAGQQELASFHSTSKGYMGECGFRGGYVEVVNMDAAVQQQMLKLMSVRLCPPVPGQALLDLVVSPPAPTDPSFAQFQAEKQAVLAELAAKAKLTEQVFNEAPGISCNPVQGAMYSFPRVQLPPRAVERAQELGLAPDMFFCLRLLEETGICVVPGSGFGQREGTYHFRMTILPPLEKLRLLLEKLSRFHAKFTLEYS.

An N-acetylalanine modification is found at Ala-2. Position 22 is a phosphothreonine (Thr-22). Position 314 is an N6-(pyridoxal phosphate)lysine (Lys-314).

It belongs to the class-I pyridoxal-phosphate-dependent aminotransferase family. Alanine aminotransferase subfamily. As to quaternary structure, homodimer. Pyridoxal 5'-phosphate is required as a cofactor. As to expression, liver, kidney, heart, and skeletal muscles. Expressed at moderate levels in the adipose tissue.

It is found in the cytoplasm. The enzyme catalyses L-alanine + 2-oxoglutarate = pyruvate + L-glutamate. Its pathway is amino-acid degradation; L-alanine degradation via transaminase pathway; pyruvate from L-alanine: step 1/1. Its function is as follows. Catalyzes the reversible transamination between alanine and 2-oxoglutarate to form pyruvate and glutamate. Participates in cellular nitrogen metabolism and also in liver gluconeogenesis starting with precursors transported from skeletal muscles. The sequence is that of Alanine aminotransferase 1 (GPT) from Homo sapiens (Human).